The chain runs to 106 residues: Large ribosomal subunit protein eL42 (106 aa).

This sequence belongs to the eukaryotic ribosomal protein eL42 family. Component of the large ribosomal subunit.

The protein resides in the cytoplasm. Functionally, component of the large ribosomal subunit. The ribosome is a large ribonucleoprotein complex responsible for the synthesis of proteins in the cell. The protein is Large ribosomal subunit protein eL42 (RPL36A) of Papio anubis (Olive baboon).